The chain runs to 192 residues: Protein GrpE (192 aa).

Residues 1 to 41 (MSKEEFPHEKDLKDEVTPDKAPKKDPKAAPKEEVKENPVEN) form a disordered region.

Belongs to the GrpE family. In terms of assembly, homodimer.

Its subcellular location is the cytoplasm. Functionally, participates actively in the response to hyperosmotic and heat shock by preventing the aggregation of stress-denatured proteins, in association with DnaK and GrpE. It is the nucleotide exchange factor for DnaK and may function as a thermosensor. Unfolded proteins bind initially to DnaJ; upon interaction with the DnaJ-bound protein, DnaK hydrolyzes its bound ATP, resulting in the formation of a stable complex. GrpE releases ADP from DnaK; ATP binding to DnaK triggers the release of the substrate protein, thus completing the reaction cycle. Several rounds of ATP-dependent interactions between DnaJ, DnaK and GrpE are required for fully efficient folding. The protein is Protein GrpE of Lactobacillus johnsonii (strain CNCM I-12250 / La1 / NCC 533).